A 392-amino-acid chain; its full sequence is Frizzled-9 (392 aa).

The Extracellular portion of the chain corresponds to 1–35; it reads ACDNPEKFQYVEKSLSCAPRCSPGVDVYWSREDKD. A helical membrane pass occupies residues 36–56; the sequence is FAFVWMAVWSTLCFVSTAFTV. The Cytoplasmic segment spans residues 57–72; it reads LTFLLDPHRFQYPERP. Residues 73-93 form a helical membrane-spanning segment; the sequence is IIFLSMCYNVYSVAFIIRSVA. At 94–119 the chain is on the extracellular side; sequence GAETIACDRENGELYIIQEGLESTGC. A helical transmembrane segment spans residues 120 to 140; that stretch reads TIVFLILYYFGMASSLWWVVL. The Cytoplasmic segment spans residues 141-161; sequence TLTWFLAAGKKWGHEAIEAHS. The chain crosses the membrane as a helical span at residues 162 to 182; the sequence is SYFHMAAWGIPAMKTIVILTM. Residues 183-206 are Extracellular-facing; that stretch reads RKVAGDELTGLCYVGSMDVSALTG. Residues 207 to 227 form a helical membrane-spanning segment; sequence FVLIPLSCYLVVGTSFILTGF. At 228 to 253 the chain is on the cytoplasmic side; the sequence is VALFHIRKIMKTGGTNTEKLEKLMVK. A helical membrane pass occupies residues 254–274; that stretch reads IGVFSILYTVPATCVIVCYFY. At 275 to 312 the chain is on the extracellular side; the sequence is ERLNVDYWNLRALERACVPLPGRRAADCSLEASVPTVA. Residues 313 to 333 traverse the membrane as a helical segment; sequence VFMLKIFMSLVVGITSGVWVW. The Cytoplasmic segment spans residues 334-392; that stretch reads SSKTLQTWQSLCNRKLGVRTRGKPCSGVSCGGVHCHYKAPTVMLHMTKTDPYLDNPTHV. The short motif at 336 to 341 is the Lys-Thr-X-X-X-Trp motif, mediates interaction with the PDZ domain of Dvl family members element; sequence KTLQTW. A PDZ-binding motif is present at residues 390–392; that stretch reads THV.

The protein belongs to the G-protein coupled receptor Fz/Smo family.

The protein localises to the cell membrane. In terms of biological role, receptor for WNT2 that is coupled to the beta-catenin canonical signaling pathway, which leads to the activation of disheveled proteins, inhibition of GSK-3 kinase, nuclear accumulation of beta-catenin and activation of Wnt target genes. This chain is Frizzled-9 (FZD9), found in Gallus gallus (Chicken).